Consider the following 237-residue polypeptide: Glutathione-independent glyoxalase HSP31 (237 aa).

Catalysis depends on residues C138, H139, and E170. C138 is subject to Cysteine sulfinic acid (-SO2H).

It belongs to the peptidase C56 family. HSP31-like subfamily. As to quaternary structure, homodimer. Cys-138 is easily oxidized to sulfinic acid.

It is found in the cytoplasm. It localises to the P-body. The enzyme catalyses methylglyoxal + H2O = (R)-lactate + H(+). Its function is as follows. Catalyzes the conversion of methylglyoxal (MG) to D-lactate in a single glutathione (GSH)-independent step. May play a role in detoxifying endogenously produced glyoxals. Involved in protection against reactive oxygen species (ROS). Important for viability in stationary phase. May negatively regulate TORC1 in response to nutrient limitation. The polypeptide is Glutathione-independent glyoxalase HSP31 (Saccharomyces cerevisiae (strain ATCC 204508 / S288c) (Baker's yeast)).